We begin with the raw amino-acid sequence, 242 residues long: Biosynthetic peptidoglycan transglycosylase (242 aa).

Residues 19 to 39 (ILAALAVFWGGGIALFSVVPV) form a helical membrane-spanning segment.

Belongs to the glycosyltransferase 51 family.

The protein resides in the cell inner membrane. It catalyses the reaction [GlcNAc-(1-&gt;4)-Mur2Ac(oyl-L-Ala-gamma-D-Glu-L-Lys-D-Ala-D-Ala)](n)-di-trans,octa-cis-undecaprenyl diphosphate + beta-D-GlcNAc-(1-&gt;4)-Mur2Ac(oyl-L-Ala-gamma-D-Glu-L-Lys-D-Ala-D-Ala)-di-trans,octa-cis-undecaprenyl diphosphate = [GlcNAc-(1-&gt;4)-Mur2Ac(oyl-L-Ala-gamma-D-Glu-L-Lys-D-Ala-D-Ala)](n+1)-di-trans,octa-cis-undecaprenyl diphosphate + di-trans,octa-cis-undecaprenyl diphosphate + H(+). It functions in the pathway cell wall biogenesis; peptidoglycan biosynthesis. Peptidoglycan polymerase that catalyzes glycan chain elongation from lipid-linked precursors. In Salmonella agona (strain SL483), this protein is Biosynthetic peptidoglycan transglycosylase.